We begin with the raw amino-acid sequence, 423 residues long: uncharacterized protein (423 aa).

This sequence belongs to the IIV-6 198R family.

This is an uncharacterized protein from Aedes vexans (Inland floodwater mosquito).